The following is a 323-amino-acid chain: Homocysteine S-methyltransferase 1 (323 aa).

Positions valine 3–leucine 317 constitute a Hcy-binding domain. Residues cysteine 235, cysteine 302, and cysteine 303 each contribute to the Zn(2+) site.

In terms of assembly, monomer. Requires Zn(2+) as cofactor.

The enzyme catalyses S-methyl-L-methionine + L-homocysteine = 2 L-methionine + H(+). Catalyzes methyl transfer from S-methylmethionine (SMM) to adenosyl-L-homocysteine (AdoMet). SMM degradation (by HMT-1, HMT-2, HMT-3 and HMT-4) and biosynthesis (by MMT1) constitute the SMM cycle in plants, which is probably required to achieve short term control of AdoMet level. The protein is Homocysteine S-methyltransferase 1 (HMT-1) of Zea mays (Maize).